A 104-amino-acid chain; its full sequence is Large ribosomal subunit protein uL24 (104 aa).

This sequence belongs to the universal ribosomal protein uL24 family. In terms of assembly, part of the 50S ribosomal subunit.

In terms of biological role, one of two assembly initiator proteins, it binds directly to the 5'-end of the 23S rRNA, where it nucleates assembly of the 50S subunit. Functionally, one of the proteins that surrounds the polypeptide exit tunnel on the outside of the subunit. In Serratia proteamaculans (strain 568), this protein is Large ribosomal subunit protein uL24.